The following is a 252-amino-acid chain: 3-dehydroquinate dehydratase (252 aa).

3-dehydroquinate contacts are provided by residues Ser21, 46 to 48, and Arg82; that span reads EWR. Catalysis depends on His143, which acts as the Proton donor/acceptor. Residue Lys170 is the Schiff-base intermediate with substrate of the active site. The 3-dehydroquinate site is built by Arg213, Ser232, and Gln236.

Belongs to the type-I 3-dehydroquinase family. Homodimer.

The enzyme catalyses 3-dehydroquinate = 3-dehydroshikimate + H2O. It participates in metabolic intermediate biosynthesis; chorismate biosynthesis; chorismate from D-erythrose 4-phosphate and phosphoenolpyruvate: step 3/7. Its function is as follows. Involved in the third step of the chorismate pathway, which leads to the biosynthesis of aromatic amino acids. Catalyzes the cis-dehydration of 3-dehydroquinate (DHQ) and introduces the first double bond of the aromatic ring to yield 3-dehydroshikimate. The polypeptide is 3-dehydroquinate dehydratase (Salmonella dublin (strain CT_02021853)).